Consider the following 436-residue polypeptide: MEQPFTVNSLKKLAAMPDHTDVSLSPEERVRALSKLGCNISINEDITPRRYFRSGVEMERMASVYLEEGNLENAFVLYNKFITLFVEKLPSHRDYQQCAVPEKQDIMKKLKEIAFPRTDELKTDLLRKYNIEYQEYLQSKNKYKAEILKKLEHQRLIEAERQRIAQMRQQQLESEQFLFFEDQLKKQELARGQIRGQDSPVLSEQTDGSALSCFSTHQSNSLRNAFADHPHKSDGSNFANYSPPVNRALKPAATLSAVQNLVVEGLRCVVLSRDLCHKFLLLADSNTVRGIETCGILCGKLTHNEFTITHVVVPKQSAGPDYCDVENVEELFNVQDQHGLLTLGWIHTHPTQTAFLSSVDLHTHCSYQLMLPEAIAIVCSPKHKDTGIFRLTNAGMLEVSTCKKKGFHPHTKDPKLFSICSHVLVKDIKTTVLDLR.

M1 bears the N-acetylmethionine mark. S25 and S242 each carry phosphoserine. The 129-residue stretch at 269–397 (VVLSRDLCHK…IFRLTNAGML (129 aa)) folds into the MPN domain. The Zn(2+) site is built by H347, H349, D360, H362, C402, H408, and H410. The JAMM motif signature appears at 347-360 (HTHPTQTAFLSSVD).

This sequence belongs to the peptidase M67C family. It depends on Zn(2+) as a cofactor. As to expression, ubiquitously expressed. Isoform 1 is widely expressed while isoform 2 is testis-specific.

In terms of biological role, zinc metalloprotease that specifically cleaves 'Lys-63'-linked polyubiquitin chains. Acts as a positive regulator of the TORC1 signaling pathway by mediating 'Lys-63'-linked deubiquitination of SESN2, thereby inhibiting SESN2-interaction with the GATOR2 complex. Does not cleave 'Lys-48'-linked polyubiquitin chains. The polypeptide is AMSH-like protease (Stambpl1) (Mus musculus (Mouse)).